The primary structure comprises 241 residues: Ribose-5-phosphate isomerase A (241 aa).

Residues 29–32 (TGTT), 84–87 (DGAD), and 97–100 (KGGG) each bind substrate. The Proton acceptor role is filled by glutamate 106. A substrate-binding site is contributed by lysine 124.

Belongs to the ribose 5-phosphate isomerase family. In terms of assembly, homodimer.

It carries out the reaction aldehydo-D-ribose 5-phosphate = D-ribulose 5-phosphate. Its pathway is carbohydrate degradation; pentose phosphate pathway; D-ribose 5-phosphate from D-ribulose 5-phosphate (non-oxidative stage): step 1/1. Its function is as follows. Catalyzes the reversible conversion of ribose-5-phosphate to ribulose 5-phosphate. This Thermoplasma acidophilum (strain ATCC 25905 / DSM 1728 / JCM 9062 / NBRC 15155 / AMRC-C165) protein is Ribose-5-phosphate isomerase A.